We begin with the raw amino-acid sequence, 303 residues long: MLNSHNRTEERSTEDIILEPYTYLISQPGKDIRAKLISAFDLWLHVPKDVLCVINKIIGMLHNASLMIDDVQDDSDLRRGVPVAHHIYGVPQTINTANYVIFLALQEVMKLNIPSMMQVCTEELINLHRGQGIELYWRDSLTCPTEEEYIDMVNNKTSGLLRLAVRLMQAASESDIDYTPLVNIIGIHFQVRDDYMNLQSTSYTNNKGFCEDLTEGKFSFPIIHAIRKDPSNRQLLNIISQKPTSIEVKKYALEVIRKAGSFEYVREFLRQKEAESLKEIKRLGGNPLLEKYIETIRVEATND.

Residues lysine 30, arginine 33, and histidine 62 each coordinate isopentenyl diphosphate. 2 residues coordinate Mg(2+): aspartate 69 and aspartate 73. Arginine 78 contacts dimethylallyl diphosphate. Arginine 79 provides a ligand contact to isopentenyl diphosphate. Residues lysine 156, threonine 157, glutamine 190, lysine 207, and lysine 217 each coordinate dimethylallyl diphosphate.

The protein belongs to the FPP/GGPP synthase family. Requires Mg(2+) as cofactor.

It is found in the cytoplasm. The catalysed reaction is isopentenyl diphosphate + dimethylallyl diphosphate = (2E)-geranyl diphosphate + diphosphate. The enzyme catalyses isopentenyl diphosphate + (2E)-geranyl diphosphate = (2E,6E)-farnesyl diphosphate + diphosphate. It carries out the reaction isopentenyl diphosphate + (2E,6E)-farnesyl diphosphate = (2E,6E,10E)-geranylgeranyl diphosphate + diphosphate. The protein operates within isoprenoid biosynthesis; farnesyl diphosphate biosynthesis; farnesyl diphosphate from geranyl diphosphate and isopentenyl diphosphate: step 1/1. Its pathway is isoprenoid biosynthesis; geranyl diphosphate biosynthesis; geranyl diphosphate from dimethylallyl diphosphate and isopentenyl diphosphate: step 1/1. It functions in the pathway isoprenoid biosynthesis; geranylgeranyl diphosphate biosynthesis; geranylgeranyl diphosphate from farnesyl diphosphate and isopentenyl diphosphate: step 1/1. In terms of biological role, catalyzes the trans-addition of the three molecules of IPP onto DMAPP to form geranylgeranyl pyrophosphate. This Mucor circinelloides f. lusitanicus (Mucor racemosus var. lusitanicus) protein is Geranylgeranyl pyrophosphate synthase.